A 118-amino-acid polypeptide reads, in one-letter code: uncharacterized protein (118 aa).

This is an uncharacterized protein from Saccharomyces cerevisiae (strain ATCC 204508 / S288c) (Baker's yeast).